Reading from the N-terminus, the 147-residue chain is Lysozyme C-1 (147 aa).

The first 18 residues, Met-1–Gly-18, serve as a signal peptide directing secretion. A C-type lysozyme domain is found at Lys-19–Leu-147. 4 disulfide bridges follow: Cys-24-Cys-145, Cys-48-Cys-133, Cys-82-Cys-98, and Cys-94-Cys-112. Catalysis depends on residues Glu-53 and Asp-70.

It belongs to the glycosyl hydrolase 22 family.

The protein resides in the secreted. The enzyme catalyses Hydrolysis of (1-&gt;4)-beta-linkages between N-acetylmuramic acid and N-acetyl-D-glucosamine residues in a peptidoglycan and between N-acetyl-D-glucosamine residues in chitodextrins.. Its function is as follows. Lysozymes have primarily a bacteriolytic function; those in tissues and body fluids are associated with the monocyte-macrophage system and enhance the activity of immunoagents. This is Lysozyme C-1 from Anas platyrhynchos (Mallard).